We begin with the raw amino-acid sequence, 187 residues long: 1,6-anhydro-N-acetylmuramyl-L-alanine amidase AmpD (187 aa).

The N-acetylmuramoyl-L-alanine amidase domain occupies 30–167; sequence LLVVHNISLP…APERKTDPGP (138 aa). A Zn(2+)-binding site is contributed by His34. Catalysis depends on Glu116, which acts as the Proton acceptor. His154 and Asp164 together coordinate Zn(2+).

Belongs to the N-acetylmuramoyl-L-alanine amidase 2 family. The cofactor is Zn(2+).

The protein localises to the cytoplasm. The catalysed reaction is Hydrolyzes the link between N-acetylmuramoyl residues and L-amino acid residues in certain cell-wall glycopeptides.. With respect to regulation, amidase activity is inhibited by metal chelators such as EDTA, dipicolinic acid or 1,10-phenanthroline. Involved in cell wall peptidoglycan recycling. Specifically cleaves the amide bond between the lactyl group of N-acetylmuramic acid and the alpha-amino group of the L-alanine in degradation products containing an anhydro N-acetylmuramyl moiety. Is also involved in beta-lactamase induction. This Citrobacter freundii protein is 1,6-anhydro-N-acetylmuramyl-L-alanine amidase AmpD.